Consider the following 195-residue polypeptide: ATP synthase subunit b (195 aa).

A helical transmembrane segment spans residues 28–48; the sequence is IFPNVYVLIAHVISLIFLLLL.

It belongs to the ATPase B chain family. In terms of assembly, F-type ATPases have 2 components, F(1) - the catalytic core - and F(0) - the membrane proton channel. F(1) has five subunits: alpha(3), beta(3), gamma(1), delta(1), epsilon(1). F(0) has three main subunits: a(1), b(2) and c(10-14). The alpha and beta chains form an alternating ring which encloses part of the gamma chain. F(1) is attached to F(0) by a central stalk formed by the gamma and epsilon chains, while a peripheral stalk is formed by the delta and b chains.

It is found in the cell membrane. Functionally, f(1)F(0) ATP synthase produces ATP from ADP in the presence of a proton or sodium gradient. F-type ATPases consist of two structural domains, F(1) containing the extramembraneous catalytic core and F(0) containing the membrane proton channel, linked together by a central stalk and a peripheral stalk. During catalysis, ATP synthesis in the catalytic domain of F(1) is coupled via a rotary mechanism of the central stalk subunits to proton translocation. Component of the F(0) channel, it forms part of the peripheral stalk, linking F(1) to F(0). The chain is ATP synthase subunit b from Malacoplasma penetrans (strain HF-2) (Mycoplasma penetrans).